The sequence spans 92 residues: UPF0473 protein Cbei_1107 (92 aa).

The protein belongs to the UPF0473 family.

In Clostridium beijerinckii (strain ATCC 51743 / NCIMB 8052) (Clostridium acetobutylicum), this protein is UPF0473 protein Cbei_1107.